The following is a 237-amino-acid chain: Keratin-associated protein 5-5 (237 aa).

8 tandem repeats follow at residues 62–65, 68–71, 74–77, 159–162, 178–181, 188–191, 198–201, and 227–230. The interval 62–230 is 8 X 4 AA repeats of C-C-X-P; that stretch reads CCVPVCCCKP…CCCQSSCCVP (169 aa).

Belongs to the KRTAP type 5 family. In terms of assembly, interacts with hair keratins. Restricted to hair root, not detected in any other tissues.

In terms of biological role, in the hair cortex, hair keratin intermediate filaments are embedded in an interfilamentous matrix, consisting of hair keratin-associated protein (KRTAP), which are essential for the formation of a rigid and resistant hair shaft through their extensive disulfide bond cross-linking with abundant cysteine residues of hair keratins. The matrix proteins include the high-sulfur and high-glycine-tyrosine keratins. The sequence is that of Keratin-associated protein 5-5 (KRTAP5-5) from Homo sapiens (Human).